A 262-amino-acid chain; its full sequence is Adenosine deaminase RL5 (262 aa).

Cu cation contacts are provided by asparagine 36, tyrosine 40, methionine 68, histidine 73, cysteine 75, asparagine 114, cysteine 118, histidine 135, cysteine 172, cysteine 175, cysteine 234, and cysteine 237.

This sequence belongs to the purine nucleoside phosphorylase YfiH/LACC1 family. In terms of assembly, homodimer. The cofactor is Cu cation.

The enzyme catalyses adenosine + phosphate = alpha-D-ribose 1-phosphate + adenine. The catalysed reaction is S-methyl-5'-thioadenosine + phosphate = 5-(methylsulfanyl)-alpha-D-ribose 1-phosphate + adenine. It catalyses the reaction inosine + phosphate = alpha-D-ribose 1-phosphate + hypoxanthine. It carries out the reaction adenosine + H2O + H(+) = inosine + NH4(+). Its function is as follows. Purine nucleoside enzyme that catalyzes the phosphorolysis of adenosine and inosine nucleosides, yielding D-ribose 1-phosphate and the respective free bases, adenine and hypoxanthine. Also catalyzes the phosphorolysis of S-methyl-5'-thioadenosine into adenine and S-methyl-5-thio-alpha-D-ribose 1-phosphate. Also has adenosine deaminase activity. Also acts as a multicopper oxidase able to oxidize a wide variety of polyphenols and related compounds in vitro. Displays substrate preference as follows: syringaldazine &gt; 2,6-dimethoxyphenol &gt; veratryl alcohol &gt; guaiacol &gt; tetramethylbenzidine &gt; 4-methoxybenzyl alcohol &gt; 2,2'-azino-bis(3-ethylbenzthiazoline-6-sulfonic acid) (ABTS) &gt;&gt; phenol red &gt; 1-hydroxybenzotriazole. Cannot use 3,4-dimetoxybenzyl alcohol and violuric acid as substrates. As this enzyme is derived from a rumen microbial community, it may have a role in the digestion of complex plant materials such as ryegrass lignin. The sequence is that of Adenosine deaminase RL5 from Unknown prokaryotic organism.